A 182-amino-acid chain; its full sequence is Shikimate kinase (182 aa).

14 to 19 (GAGKTT) contacts ATP. A Mg(2+)-binding site is contributed by Thr-18. 3 residues coordinate substrate: Asp-36, Arg-60, and Gly-84. An ATP-binding site is contributed by Arg-122. Arg-141 provides a ligand contact to substrate.

It belongs to the shikimate kinase family. As to quaternary structure, monomer. Requires Mg(2+) as cofactor.

It is found in the cytoplasm. It catalyses the reaction shikimate + ATP = 3-phosphoshikimate + ADP + H(+). It functions in the pathway metabolic intermediate biosynthesis; chorismate biosynthesis; chorismate from D-erythrose 4-phosphate and phosphoenolpyruvate: step 5/7. Catalyzes the specific phosphorylation of the 3-hydroxyl group of shikimic acid using ATP as a cosubstrate. In Marinomonas sp. (strain MWYL1), this protein is Shikimate kinase.